We begin with the raw amino-acid sequence, 492 residues long: Protein nucleotidyltransferase YdiU (492 aa).

ATP contacts are provided by Gly-91, Gly-93, Arg-94, Lys-114, Asp-126, Gly-127, Arg-180, and Arg-187. Asp-256 serves as the catalytic Proton acceptor. Asn-257 and Asp-266 together coordinate Mg(2+). An ATP-binding site is contributed by Asp-266.

This sequence belongs to the SELO family. The cofactor is Mg(2+). Mn(2+) is required as a cofactor.

The catalysed reaction is L-seryl-[protein] + ATP = 3-O-(5'-adenylyl)-L-seryl-[protein] + diphosphate. It carries out the reaction L-threonyl-[protein] + ATP = 3-O-(5'-adenylyl)-L-threonyl-[protein] + diphosphate. The enzyme catalyses L-tyrosyl-[protein] + ATP = O-(5'-adenylyl)-L-tyrosyl-[protein] + diphosphate. It catalyses the reaction L-histidyl-[protein] + UTP = N(tele)-(5'-uridylyl)-L-histidyl-[protein] + diphosphate. The catalysed reaction is L-seryl-[protein] + UTP = O-(5'-uridylyl)-L-seryl-[protein] + diphosphate. It carries out the reaction L-tyrosyl-[protein] + UTP = O-(5'-uridylyl)-L-tyrosyl-[protein] + diphosphate. In terms of biological role, nucleotidyltransferase involved in the post-translational modification of proteins. It can catalyze the addition of adenosine monophosphate (AMP) or uridine monophosphate (UMP) to a protein, resulting in modifications known as AMPylation and UMPylation. This is Protein nucleotidyltransferase YdiU from Synechococcus sp. (strain ATCC 27144 / PCC 6301 / SAUG 1402/1) (Anacystis nidulans).